The primary structure comprises 441 residues: Ribosomal protein uS12 methylthiotransferase RimO (441 aa).

The region spanning 8 to 118 is the MTTase N-terminal domain; that stretch reads PKIGFVSLGC…VLEHVHHYVP (111 aa). [4Fe-4S] cluster-binding residues include cysteine 17, cysteine 53, cysteine 82, cysteine 150, cysteine 154, and cysteine 157. The Radical SAM core domain occupies 136-373; it reads LTPRHYAYLK…MQLQQQISAE (238 aa). One can recognise a TRAM domain in the interval 376-441; sequence QEKVGREILV…DEYDLWGSRV (66 aa).

It belongs to the methylthiotransferase family. RimO subfamily. Requires [4Fe-4S] cluster as cofactor.

The protein resides in the cytoplasm. It carries out the reaction L-aspartate(89)-[ribosomal protein uS12]-hydrogen + (sulfur carrier)-SH + AH2 + 2 S-adenosyl-L-methionine = 3-methylsulfanyl-L-aspartate(89)-[ribosomal protein uS12]-hydrogen + (sulfur carrier)-H + 5'-deoxyadenosine + L-methionine + A + S-adenosyl-L-homocysteine + 2 H(+). Its function is as follows. Catalyzes the methylthiolation of an aspartic acid residue of ribosomal protein uS12. In Shigella sonnei (strain Ss046), this protein is Ribosomal protein uS12 methylthiotransferase RimO.